We begin with the raw amino-acid sequence, 659 residues long: Ion-translocating oxidoreductase complex subunit C (659 aa).

2 consecutive 4Fe-4S ferredoxin-type domains span residues threonine 366–tyrosine 397 and lysine 407–tyrosine 436. Residues cysteine 377, cysteine 380, cysteine 383, cysteine 387, cysteine 416, cysteine 419, cysteine 422, and cysteine 426 each coordinate [4Fe-4S] cluster.

The protein belongs to the 4Fe4S bacterial-type ferredoxin family. RnfC subfamily. As to quaternary structure, the complex is composed of six subunits: RnfA, RnfB, RnfC, RnfD, RnfE and RnfG. [4Fe-4S] cluster is required as a cofactor.

The protein resides in the cell inner membrane. Its function is as follows. Part of a membrane-bound complex that couples electron transfer with translocation of ions across the membrane. This chain is Ion-translocating oxidoreductase complex subunit C, found in Yersinia pestis bv. Antiqua (strain Nepal516).